The sequence spans 172 residues: Protein CapG (172 aa).

Belongs to the transferase hexapeptide repeat family.

It participates in capsule biogenesis; capsule polysaccharide biosynthesis. In terms of biological role, required for the biosynthesis of type 1 capsular polysaccharide. The polypeptide is Protein CapG (capG) (Staphylococcus aureus).